We begin with the raw amino-acid sequence, 316 residues long: Probable cell division protein WhiA (316 aa).

Positions 277–310 (SLEQLGRLADPPITKDAIAGRIRRLLQLAEKTEK) form a DNA-binding region, H-T-H motif.

It belongs to the WhiA family.

Its function is as follows. Involved in cell division and chromosome segregation. The polypeptide is Probable cell division protein WhiA (Bifidobacterium adolescentis (strain ATCC 15703 / DSM 20083 / NCTC 11814 / E194a)).